We begin with the raw amino-acid sequence, 230 residues long: Uracil-DNA glycosylase (230 aa).

Aspartate 72 acts as the Proton acceptor in catalysis.

It belongs to the uracil-DNA glycosylase (UDG) superfamily. UNG family.

It is found in the cytoplasm. It catalyses the reaction Hydrolyzes single-stranded DNA or mismatched double-stranded DNA and polynucleotides, releasing free uracil.. Its function is as follows. Excises uracil residues from the DNA which can arise as a result of misincorporation of dUMP residues by DNA polymerase or due to deamination of cytosine. The sequence is that of Uracil-DNA glycosylase from Wolinella succinogenes (strain ATCC 29543 / DSM 1740 / CCUG 13145 / JCM 31913 / LMG 7466 / NCTC 11488 / FDC 602W) (Vibrio succinogenes).